The primary structure comprises 577 residues: Aspartate--tRNA ligase (577 aa).

Glu-169 lines the L-aspartate pocket. The aspartate stretch occupies residues 193 to 196 (QLYK). Residue Arg-215 coordinates L-aspartate. ATP-binding positions include 215-217 (RDE) and Gln-224. His-440 is an L-aspartate binding site. Glu-474 is an ATP binding site. Arg-481 is a binding site for L-aspartate. 526–529 (GIDR) contributes to the ATP binding site.

Belongs to the class-II aminoacyl-tRNA synthetase family. Type 1 subfamily. As to quaternary structure, homodimer.

It localises to the cytoplasm. The enzyme catalyses tRNA(Asp) + L-aspartate + ATP = L-aspartyl-tRNA(Asp) + AMP + diphosphate. Functionally, catalyzes the attachment of L-aspartate to tRNA(Asp) in a two-step reaction: L-aspartate is first activated by ATP to form Asp-AMP and then transferred to the acceptor end of tRNA(Asp). The protein is Aspartate--tRNA ligase of Mesoplasma florum (strain ATCC 33453 / NBRC 100688 / NCTC 11704 / L1) (Acholeplasma florum).